The chain runs to 293 residues: Biphenyl-2,3-diol 1,2-dioxygenase (293 aa).

VOC domains follow at residues 5–119 and 143–265; these read RLGY…IYYG and GIGH…FGWG. Residues histidine 146, histidine 210, and glutamate 261 each contribute to the Fe cation site.

The protein belongs to the extradiol ring-cleavage dioxygenase family. In terms of assembly, homooctamer. Fe(2+) is required as a cofactor.

The enzyme catalyses biphenyl-2,3-diol + O2 = 2-hydroxy-6-oxo-6-phenylhexa-2,4-dienoate + H(+). Its pathway is xenobiotic degradation; biphenyl degradation; 2-hydroxy-2,4-pentadienoate and benzoate from biphenyl: step 3/4. The polypeptide is Biphenyl-2,3-diol 1,2-dioxygenase (bphC) (Pseudomonas sp. (strain KKS102)).